We begin with the raw amino-acid sequence, 184 residues long: ATP synthase subunit b, chloroplastic (184 aa).

Residues 4–24 (IINLVIFSGYWPIAGNFGLNT) traverse the membrane as a helical segment.

It belongs to the ATPase B chain family. In terms of assembly, F-type ATPases have 2 components, F(1) - the catalytic core - and F(0) - the membrane proton channel. F(1) has five subunits: alpha(3), beta(3), gamma(1), delta(1), epsilon(1). F(0) has four main subunits: a(1), b(1), b'(1) and c(10-14). The alpha and beta chains form an alternating ring which encloses part of the gamma chain. F(1) is attached to F(0) by a central stalk formed by the gamma and epsilon chains, while a peripheral stalk is formed by the delta, b and b' chains.

Its subcellular location is the plastid. It localises to the chloroplast thylakoid membrane. In terms of biological role, f(1)F(0) ATP synthase produces ATP from ADP in the presence of a proton or sodium gradient. F-type ATPases consist of two structural domains, F(1) containing the extramembraneous catalytic core and F(0) containing the membrane proton channel, linked together by a central stalk and a peripheral stalk. During catalysis, ATP synthesis in the catalytic domain of F(1) is coupled via a rotary mechanism of the central stalk subunits to proton translocation. Functionally, component of the F(0) channel, it forms part of the peripheral stalk, linking F(1) to F(0). The polypeptide is ATP synthase subunit b, chloroplastic (Physcomitrium patens (Spreading-leaved earth moss)).